The chain runs to 61 residues: MAKRISVKLVKSTIGQKQPVCSTIRSLGLKKLNSTVEHDANPAVLGMVKRVAHLVEVKELN.

It belongs to the universal ribosomal protein uL30 family. Part of the 50S ribosomal subunit.

The sequence is that of Large ribosomal subunit protein uL30 from Treponema denticola (strain ATCC 35405 / DSM 14222 / CIP 103919 / JCM 8153 / KCTC 15104).